The sequence spans 416 residues: Peptide chain release factor subunit 1 (416 aa).

Belongs to the eukaryotic release factor 1 family. In terms of assembly, heterodimer of two subunits, one of which binds GTP.

The protein localises to the cytoplasm. Directs the termination of nascent peptide synthesis (translation) in response to the termination codons UAA, UAG and UGA. The polypeptide is Peptide chain release factor subunit 1 (Halorubrum lacusprofundi (strain ATCC 49239 / DSM 5036 / JCM 8891 / ACAM 34)).